Here is a 168-residue protein sequence, read N- to C-terminus: Pheromone-binding protein (168 aa).

Residues 1 to 26 (MNKTTTKMKVAVVAIVVYLAVGNVDS) form the signal peptide. Disulfide bonds link cysteine 45-cysteine 80, cysteine 76-cysteine 134, and cysteine 123-cysteine 143.

The protein belongs to the PBP/GOBP family. In terms of assembly, homodimer. As to expression, antenna.

Functionally, this major soluble protein in olfactory sensilla of male moths might serve to solubilize the extremely hydrophobic pheromone molecules and to transport pheromone through the aqueous lymph to receptors located on olfactory cilia. PBP is also found in sensilla from female M.sexta antennae. The polypeptide is Pheromone-binding protein (Manduca sexta (Tobacco hawkmoth)).